The primary structure comprises 397 residues: Subtilisin-like serine protease Pen c 1 (397 aa).

The signal sequence occupies residues 1 to 19 (MGFLKVLATSLATLAVVDA). Positions 20 to 115 (GTLLTASNTD…IEPDMIVNAT (96 aa)) are cleaved as a propeptide — removed in mature form. One can recognise an Inhibitor I9 domain in the interval 35 to 113 (SYIVVMNDDV…KYIEPDMIVN (79 aa)). Residues 125–397 (SWGLARISSK…SKLLYNGINV (273 aa)) form the Peptidase S8 domain. Catalysis depends on charge relay system residues Asp157, His188, and Ser343.

It belongs to the peptidase S8 family.

Its subcellular location is the secreted. Its activity is regulated as follows. Inhibited by 0.1 mM diisopropyl fluorophosphate (DFP), phenylmethanesulfonyl fluoride (PMSF), chymostatin and elastatinal. Not inhibited by N-alpha-p-tosyl-L-lysine chloromethylketone (TLCK), N-tosyl-L-phenylalanyl chloromethyl ketone (TPCK) or N-carbobenzoxy-L-phenylalanine chloromethylketone (ZPCK). In terms of biological role, serine protease. Hydrolyzes azocasein. Cleaves peptide bonds of the oxidized insulin B chain preferably at 15-Leu-|-Tyr-16, but also at 4-Gln-|-His-5 and 24-Phe-|-Phe-25, and to a lesser extent at 5-His-|-Leu-6 and 25-Phe-|-Tyr-26. Hydrolyzes amide bonds between amino acids and 7-amino-4-methylcoumarin (AMC) in vitro. The protein is Subtilisin-like serine protease Pen c 1 of Penicillium citrinum.